The sequence spans 629 residues: tRNA uridine 5-carboxymethylaminomethyl modification enzyme MnmG (629 aa).

FAD contacts are provided by residues 14 to 19 (GAGHAG), Val126, and Ser181. Residue 273–287 (GPRYCPSIEDKVVRF) participates in NAD(+) binding. Gln370 serves as a coordination point for FAD.

This sequence belongs to the MnmG family. In terms of assembly, homodimer. Heterotetramer of two MnmE and two MnmG subunits. FAD serves as cofactor.

It is found in the cytoplasm. NAD-binding protein involved in the addition of a carboxymethylaminomethyl (cmnm) group at the wobble position (U34) of certain tRNAs, forming tRNA-cmnm(5)s(2)U34. This chain is tRNA uridine 5-carboxymethylaminomethyl modification enzyme MnmG, found in Bacillus mycoides (strain KBAB4) (Bacillus weihenstephanensis).